A 328-amino-acid chain; its full sequence is N-acetyl-gamma-glutamyl-phosphate reductase (328 aa).

C143 is a catalytic residue.

This sequence belongs to the NAGSA dehydrogenase family. Type 1 subfamily.

It is found in the cytoplasm. It catalyses the reaction N-acetyl-L-glutamate 5-semialdehyde + phosphate + NADP(+) = N-acetyl-L-glutamyl 5-phosphate + NADPH + H(+). The protein operates within amino-acid biosynthesis; L-arginine biosynthesis; N(2)-acetyl-L-ornithine from L-glutamate: step 3/4. Catalyzes the NADPH-dependent reduction of N-acetyl-5-glutamyl phosphate to yield N-acetyl-L-glutamate 5-semialdehyde. This chain is N-acetyl-gamma-glutamyl-phosphate reductase, found in Methanoregula boonei (strain DSM 21154 / JCM 14090 / 6A8).